A 78-amino-acid chain; its full sequence is Large ribosomal subunit protein bL31 (78 aa).

The protein belongs to the bacterial ribosomal protein bL31 family. Type A subfamily. Part of the 50S ribosomal subunit.

Functionally, binds the 23S rRNA. The polypeptide is Large ribosomal subunit protein bL31 (rpmE) (Rickettsia felis (strain ATCC VR-1525 / URRWXCal2) (Rickettsia azadi)).